Here is a 359-residue protein sequence, read N- to C-terminus: Type-1 angiotensin II receptor A (359 aa).

The Extracellular portion of the chain corresponds to 1–25 (MALNSSAEDGIKRIQDDCPKAGRHS). An N-linked (GlcNAc...) asparagine glycan is attached at Asn4. Residues Gln15 and Asp17 each coordinate angiotensin II. Cystine bridges form between Cys18–Cys274 and Cys101–Cys180. Residues 26–55 (YIFVMIPTLYSIIFVVGIFGNSLVVIVIYF) traverse the membrane as a helical segment. At 56–61 (YMKLKT) the chain is on the cytoplasmic side. A helical membrane pass occupies residues 62-89 (VASVFLLNLALADLCFLLTLPLWAVYTA). Over 90 to 98 (MEYRWPFGN) the chain is Extracellular. A helical membrane pass occupies residues 99 to 125 (HLCKIASASVSFNLYASVFLLTCLSID). Topologically, residues 126-141 (RYLAIVHPMKSRLRRT) are cytoplasmic. The chain crosses the membrane as a helical span at residues 142–165 (MLVAKVTCIIIWLMAGLASLPAVI). Residues 166–190 (HRNVYFIENTNITVCAFHYESRNST) are Extracellular-facing. Angiotensin II is bound at residue Arg167. N-linked (GlcNAc...) asparagine glycosylation is present at Asn176. Angiotensin II is bound by residues Phe182, His183, and Tyr184. A glycan (N-linked (GlcNAc...) asparagine) is linked at Asn188. Residues 191 to 216 (LPIGLGLTKNILGFLFPFLIILTSYT) traverse the membrane as a helical segment. Lys199 contributes to the angiotensin II binding site. The Cytoplasmic portion of the chain corresponds to 217–239 (LIWKALKKAYEIQKNKPRNDDIF). Residues 240 to 268 (RIIMAIVLFFFFSWVPHQIFTFLDVLIQL) form a helical membrane-spanning segment. At 269 to 278 (GVIHDCKISD) the chain is on the extracellular side. The chain crosses the membrane as a helical span at residues 279-304 (IVDTAMPITICIAYFNNCLNPLFYGF). Over 305–359 (LGKKFKKYFLQLLKYIPPKAKSHSSLSTKMSTLSYRPSDNMSSSAKKPASCFEVE) the chain is Cytoplasmic. Over residues 337–349 (LSYRPSDNMSSSA) the composition is skewed to polar residues. Residues 337–359 (LSYRPSDNMSSSAKKPASCFEVE) are disordered. A lipid anchor (S-palmitoyl cysteine) is attached at Cys355.

Belongs to the G-protein coupled receptor 1 family. Interacts with MAS1. Interacts with ARRB1. Interacts with FLNA (via filamin repeat 21); increases PKA-mediated phosphorylation of FLNA. C-terminal Ser or Thr residues may be phosphorylated. As to expression, is expressed in the liver, kidney, aorta, lung, uterus, ovary, spleen, heart, adrenal gland, and vascular smooth muscle cell.

The protein resides in the cell membrane. Functionally, receptor for angiotensin II, a vasoconstricting peptide, which acts as a key regulator of blood pressure and sodium retention by the kidney. The activated receptor in turn couples to G-alpha proteins G(q) (GNAQ, GNA11, GNA14 or GNA15) and thus activates phospholipase C and increases the cytosolic Ca(2+) concentrations, which in turn triggers cellular responses such as stimulation of protein kinase C. This chain is Type-1 angiotensin II receptor A (Agtr1), found in Rattus norvegicus (Rat).